A 240-amino-acid polypeptide reads, in one-letter code: tRNA (guanine-N(1)-)-methyltransferase (240 aa).

Residues Gly110 and 129–134 (LGDFVL) contribute to the S-adenosyl-L-methionine site.

The protein belongs to the RNA methyltransferase TrmD family. Homodimer.

Its subcellular location is the cytoplasm. It carries out the reaction guanosine(37) in tRNA + S-adenosyl-L-methionine = N(1)-methylguanosine(37) in tRNA + S-adenosyl-L-homocysteine + H(+). In terms of biological role, specifically methylates guanosine-37 in various tRNAs. This chain is tRNA (guanine-N(1)-)-methyltransferase, found in Clostridium botulinum (strain 657 / Type Ba4).